The following is a 533-amino-acid chain: Purine-cytosine permease FCY2 (533 aa).

At 1–98 the chain is on the cytoplasmic side; that stretch reads MLEEGNNVYE…NAASMWFSAN (98 aa). Lys16 participates in a covalent cross-link: Glycyl lysine isopeptide (Lys-Gly) (interchain with G-Cter in ubiquitin). Ser18 bears the Phosphoserine mark. A helical transmembrane segment spans residues 99–119; it reads MVIASYALGALGPMVFGLNFG. At 120–121 the chain is on the extracellular side; the sequence is QS. Residues 122–141 form a helical membrane-spanning segment; sequence VLVIIFFNIMGLIFVAFFSV. At 142–198 the chain is on the cytoplasmic side; it reads FGAELGLRQMILSRYLVGNVTARIFSLINVIACVGWGIVNTSVSAQLLNMVNEGSGH. The interval 165 to 184 is surface seeking; it reads IFSLINVIACVGWGIVNTSV. Residues 199–218 traverse the membrane as a helical segment; that stretch reads VCPIWAGCLIIIGGTVLVTF. The Extracellular portion of the chain corresponds to 219–256; that stretch reads FGYSVIHAYEKWSWVPNFAVFLVIIAQLSRSGKFKGGE. Residues 257–276 traverse the membrane as a helical segment; that stretch reads WVGGATTAGSVLSFGSSIFG. At 277 to 300 the chain is on the cytoplasmic side; sequence FAAGWTTYAADYTVYMPKSTNKYK. Residues 301-320 form a helical membrane-spanning segment; that stretch reads IFFSLVAGLAFPLFFTMILG. Residues 321 to 347 are Extracellular-facing; it reads AASAMAALNDPTWKAYYDKNAMGGVIY. Residues 348–367 traverse the membrane as a helical segment; that stretch reads AILVPNSLNGFGQFCCVLLA. Residues 368–398 are Cytoplasmic-facing; that stretch reads LSTIANNIPNMYTVALSAQALWAPLAKIPRV. A helical membrane pass occupies residues 399–418; that stretch reads VWTMAGNAATLGISIPATYY. The Extracellular portion of the chain corresponds to 419 to 465; that stretch reads FDGFMENFMDSIGYYLAIYIAISCSEHFFYRRSFSAYNIDDWDNWEH. Residues 466–485 form a helical membrane-spanning segment; that stretch reads LPIGIAGTAALIVGAFGVAL. The Cytoplasmic segment spans residues 486–533; that stretch reads GMCQTYWVGEIGRLIGKYGGDIGFELGASWAFIIYNILRPLELKYFGR.

This sequence belongs to the purine-cytosine permease (2.A.39) family. In terms of processing, not N-glycosylated.

The protein localises to the membrane. In terms of biological role, this permease has a broad specificity towards purines, and also transport cytosine and 5-methylcytosine but neither uracil nor thymine. The chain is Purine-cytosine permease FCY2 (FCY2) from Saccharomyces cerevisiae (strain ATCC 204508 / S288c) (Baker's yeast).